The primary structure comprises 75 residues: Exodeoxyribonuclease 7 small subunit (75 aa).

The protein belongs to the XseB family. In terms of assembly, heterooligomer composed of large and small subunits.

It is found in the cytoplasm. The enzyme catalyses Exonucleolytic cleavage in either 5'- to 3'- or 3'- to 5'-direction to yield nucleoside 5'-phosphates.. Functionally, bidirectionally degrades single-stranded DNA into large acid-insoluble oligonucleotides, which are then degraded further into small acid-soluble oligonucleotides. This Citrifermentans bemidjiense (strain ATCC BAA-1014 / DSM 16622 / JCM 12645 / Bem) (Geobacter bemidjiensis) protein is Exodeoxyribonuclease 7 small subunit.